The primary structure comprises 92 residues: Small ribosomal subunit protein uS19 (92 aa).

The protein belongs to the universal ribosomal protein uS19 family.

In terms of biological role, protein S19 forms a complex with S13 that binds strongly to the 16S ribosomal RNA. The chain is Small ribosomal subunit protein uS19 from Wigglesworthia glossinidia brevipalpis.